The following is a 147-amino-acid chain: Small ribosomal subunit protein bS16 (147 aa).

The disordered stretch occupies residues 81 to 147 (QKFTGDTSPS…GDNSGEKAEA (67 aa)). Composition is skewed to basic and acidic residues over residues 95–104 (QPERPNKDDL) and 114–125 (EAPREAITKKSE). Residues 126–140 (GAAADEASESAAGDN) are compositionally biased toward low complexity.

The protein belongs to the bacterial ribosomal protein bS16 family.

The chain is Small ribosomal subunit protein bS16 from Cutibacterium acnes (strain DSM 16379 / KPA171202) (Propionibacterium acnes).